Consider the following 661-residue polypeptide: UvrABC system protein C (661 aa).

A GIY-YIG domain is found at 25–104 (AEPGCYLMRD…IKNHQPHFNV (80 aa)). The region spanning 214–249 (DELQHLLQEQMERYAERMDYESAARVRDQLQGLDQL) is the UVR domain. The segment covering 636–652 (FFHPSDEGTDADARAAL) has biased composition (basic and acidic residues). Residues 636-661 (FFHPSDEGTDADARAALEEQPQELSA) are disordered.

This sequence belongs to the UvrC family. As to quaternary structure, interacts with UvrB in an incision complex.

The protein resides in the cytoplasm. Its function is as follows. The UvrABC repair system catalyzes the recognition and processing of DNA lesions. UvrC both incises the 5' and 3' sides of the lesion. The N-terminal half is responsible for the 3' incision and the C-terminal half is responsible for the 5' incision. This chain is UvrABC system protein C, found in Synechococcus sp. (strain CC9605).